Here is a 279-residue protein sequence, read N- to C-terminus: Reaction center protein L chain (279 aa).

Transmembrane regions (helical) follow at residues 33-56 (GFFG…GASQ), 85-113 (GLWQ…RKLG), and 116-141 (YHVP…ILMG). (7R,8Z)-bacteriochlorophyll b contacts are provided by H154 and H174. The chain crosses the membrane as a helical span at residues 171–200 (NPAHMLAITFFFTTTLAMSMHGGLILSAAN). Fe cation is bound at residue H191. An a ubiquinone-binding site is contributed by F217. Residues 226 to 252 (GSLGIHRLGLFLALSAAFWSAVCIVIS) traverse the membrane as a helical segment. H231 is a binding site for Fe cation.

Belongs to the reaction center PufL/M/PsbA/D family. As to quaternary structure, reaction center is composed of four bacteriochlorophylls, two bacteriopheophytins, two ubiquinones, one iron, and three highly hydrophobic polypeptide chains (designated L, M, and H).

The protein resides in the cell inner membrane. The reaction center is a membrane-bound complex that mediates the initial photochemical event in the electron transfer process of photosynthesis. The protein is Reaction center protein L chain (pufL) of Rubrivivax gelatinosus (strain NBRC 100245 / IL144).